A 314-amino-acid polypeptide reads, in one-letter code: Acetyl-coenzyme A carboxylase carboxyl transferase subunit beta (314 aa).

The region spanning 37 to 307 (LWQKCPACDT…MSLPSIDSEA (271 aa)) is the CoA carboxyltransferase N-terminal domain. Cys-41, Cys-44, Cys-60, and Cys-63 together coordinate Zn(2+). Residues 41 to 63 (CPACDTLTYTKDLQQNWQVCPSC) form a C4-type zinc finger.

The protein belongs to the AccD/PCCB family. Acetyl-CoA carboxylase is a heterohexamer composed of biotin carboxyl carrier protein (AccB), biotin carboxylase (AccC) and two subunits each of ACCase subunit alpha (AccA) and ACCase subunit beta (AccD). Zn(2+) is required as a cofactor.

It localises to the cytoplasm. The enzyme catalyses N(6)-carboxybiotinyl-L-lysyl-[protein] + acetyl-CoA = N(6)-biotinyl-L-lysyl-[protein] + malonyl-CoA. Its pathway is lipid metabolism; malonyl-CoA biosynthesis; malonyl-CoA from acetyl-CoA: step 1/1. In terms of biological role, component of the acetyl coenzyme A carboxylase (ACC) complex. Biotin carboxylase (BC) catalyzes the carboxylation of biotin on its carrier protein (BCCP) and then the CO(2) group is transferred by the transcarboxylase to acetyl-CoA to form malonyl-CoA. The polypeptide is Acetyl-coenzyme A carboxylase carboxyl transferase subunit beta (Synechococcus sp. (strain JA-2-3B'a(2-13)) (Cyanobacteria bacterium Yellowstone B-Prime)).